The chain runs to 126 residues: Small ribosomal subunit protein uS8 (126 aa).

It belongs to the universal ribosomal protein uS8 family. Part of the 30S ribosomal subunit. Contacts proteins S5 and S12.

Its function is as follows. One of the primary rRNA binding proteins, it binds directly to 16S rRNA central domain where it helps coordinate assembly of the platform of the 30S subunit. This Oleidesulfovibrio alaskensis (strain ATCC BAA-1058 / DSM 17464 / G20) (Desulfovibrio alaskensis) protein is Small ribosomal subunit protein uS8.